The primary structure comprises 357 residues: Peptide chain release factor 1 (357 aa).

Gln-234 carries the N5-methylglutamine modification.

It belongs to the prokaryotic/mitochondrial release factor family. Post-translationally, methylated by PrmC. Methylation increases the termination efficiency of RF1.

It is found in the cytoplasm. Peptide chain release factor 1 directs the termination of translation in response to the peptide chain termination codons UAG and UAA. The polypeptide is Peptide chain release factor 1 (prfA) (Lactococcus lactis subsp. lactis (strain IL1403) (Streptococcus lactis)).